Reading from the N-terminus, the 153-residue chain is Transcriptional regulator MraZ (153 aa).

SpoVT-AbrB domains follow at residues 7–61 (KEKH…LPDV) and 90–133 (LEMV…EPGR).

This sequence belongs to the MraZ family. Forms oligomers.

Its subcellular location is the cytoplasm. The protein localises to the nucleoid. The chain is Transcriptional regulator MraZ from Chlorobium luteolum (strain DSM 273 / BCRC 81028 / 2530) (Pelodictyon luteolum).